A 635-amino-acid chain; its full sequence is UvrABC system protein C (635 aa).

The segment covering 1 to 14 (MAQNHMSETMNDIS) has biased composition (polar residues). The segment at 1–27 (MAQNHMSETMNDISAESPDQPEPPRTG) is disordered. Positions 40–117 (SSPGVYRMLD…IKQLKPKYNV (78 aa)) constitute a GIY-YIG domain. The UVR domain occupies 227 to 262 (TKIQEELGAEMQAASEAMEYERAAALRDRIKALTQV).

It belongs to the UvrC family. In terms of assembly, interacts with UvrB in an incision complex.

The protein localises to the cytoplasm. Its function is as follows. The UvrABC repair system catalyzes the recognition and processing of DNA lesions. UvrC both incises the 5' and 3' sides of the lesion. The N-terminal half is responsible for the 3' incision and the C-terminal half is responsible for the 5' incision. The polypeptide is UvrABC system protein C (Ruegeria sp. (strain TM1040) (Silicibacter sp.)).